Reading from the N-terminus, the 202-residue chain is Large ribosomal subunit protein uL13 (202 aa).

It belongs to the universal ribosomal protein uL13 family. Component of the large ribosomal subunit (LSU). Mature N.crassa ribosomes consist of a small (40S) and a large (60S) subunit. The 40S small subunit contains 1 molecule of ribosomal RNA (18S rRNA) and at least 32 different proteins. The large 60S subunit contains 3 rRNA molecules (26S, 5.8S and 5S rRNA) and at least 42 different proteins.

The protein localises to the cytoplasm. Its function is as follows. Component of the ribosome, a large ribonucleoprotein complex responsible for the synthesis of proteins in the cell. The small ribosomal subunit (SSU) binds messenger RNAs (mRNAs) and translates the encoded message by selecting cognate aminoacyl-transfer RNA (tRNA) molecules. The large subunit (LSU) contains the ribosomal catalytic site termed the peptidyl transferase center (PTC), which catalyzes the formation of peptide bonds, thereby polymerizing the amino acids delivered by tRNAs into a polypeptide chain. The nascent polypeptides leave the ribosome through a tunnel in the LSU and interact with protein factors that function in enzymatic processing, targeting, and the membrane insertion of nascent chains at the exit of the ribosomal tunnel. In Neurospora crassa (strain ATCC 24698 / 74-OR23-1A / CBS 708.71 / DSM 1257 / FGSC 987), this protein is Large ribosomal subunit protein uL13 (crp-46).